The primary structure comprises 988 residues: MKIARGRELLTPEQRQAFMQIPEDEWILGTYFTFSKRDLEIVNKRRREENRLGFAVQLAVLRYPGWPYTHIKSIPDSVIQYISKQIGVSPSSLDHYPQRENTLWDHLKEIRSEYDFVTFTLSEYRMTFKYLHQLALENGDAIHLLHECIDFLRKNKIILPAITTLERMVWEARAMAEKKLFNTVSKSLTNEQKEKLEGIITSQHPSESNKTILGWLKEPPGHPSPETFLKIIERLEYIRGMDLETVQISHLHRNRLLQLSRLGSRYEPYAFRDFQENKRYSILTIYLLQLTQELTDKAFEIHDRQILSLLSKGRKAQEEIQKQNGKKLNEKVIHFTNIGQALIKAREEKLDVFKVLESVIEWNTFVSSVEEAQELARPADYDYLDLLQKRFYSLRKYTPTLLRVLEFHSTKANEPLLQAVEIIRGMNESGKRKVPDDSPVDFISKRWKRHLYEDDGTTINRHYYEMAVLTELREHVRAGDVSIVGSRQYRDFEEYLFSEDTWNQSKGNTRLSVSLSFEDYITERTSSFNERLKWLAANSNKLDGVSLEKGKLSLARLEKDVPEEAKKFSASLYQMLPRIKLTDLLMDVAHITGFHEQFTHASNNRKPDKEETIIIMAALLGMGMNIGLSKMAEATPGLTYKQLANVSQWRMYEDAMNKAQAILVNFHHKLQLPFYWGDGTTSSSDGMRMQLGVSSLHADANPHYGTGKGATIYRFTSDQFSSYYTKIIHTNSRDAIHVLDGLLHHETDLNIEEHYTDTAGYTDQIFGLTHLLGFKFAPRIRDLSDSKLFTIDKASEYPKLEAILRGQINTKVIKENYEDVLRLAHSIREGTVSASLIMGKLGSYSRQNSLATALREMGRIEKTIFILNYISDESLRRKIQRGLNKGEAMNGLARAIFFGKQGELRERTIQHQLQRASALNIIINAISIWNTLHLTTAVEYKKRTGSFNEDLLHHMSPLGWEHINLLGEYHFNSEKVVSLNSLRPLKLS.

It belongs to the transposase 7 family.

Required for transposition of transposon Tn1546. The polypeptide is Transposase for transposon Tn1546 (Enterococcus faecium (Streptococcus faecium)).